The chain runs to 472 residues: Type I restriction enzyme BthVORF4518P methylase subunit (472 aa).

Residues 151–156 (QYFTPR), 181–183 (TGG), D214, and 243–244 (DS) each bind S-adenosyl-L-methionine.

This sequence belongs to the N(4)/N(6)-methyltransferase family. In terms of assembly, the type I restriction/modification system is composed of three polypeptides R, M and S; the restriction enzyme has stoichiometry R(2)M(2)S(1) while the methyltransferase is M(2)S(1).

It catalyses the reaction a 2'-deoxyadenosine in DNA + S-adenosyl-L-methionine = an N(6)-methyl-2'-deoxyadenosine in DNA + S-adenosyl-L-homocysteine + H(+). Its function is as follows. The subtype gamma methyltransferase (M) subunit of a type I restriction enzyme. The M and S subunits together form a methyltransferase (MTase) that methylates two adenine residues of an undetermined sequence. In the presence of the R subunit the complex can also act as an endonuclease, binding to the same target sequence but cutting the DNA some distance from this site. Whether the DNA is cut or modified depends on the methylation state of the target sequence. When the target site is unmodified, the DNA is cut. When the target site is hemimethylated, the complex acts as a maintenance MTase modifying the DNA so that both strands become methylated. After locating a non-methylated recognition site, the enzyme complex serves as a molecular motor that translocates DNA in an ATP-dependent manner until a collision occurs that triggers cleavage. This chain is Type I restriction enzyme BthVORF4518P methylase subunit, found in Bacteroides thetaiotaomicron (strain ATCC 29148 / DSM 2079 / JCM 5827 / CCUG 10774 / NCTC 10582 / VPI-5482 / E50).